The sequence spans 551 residues: Arginine--tRNA ligase (551 aa).

The short motif at 125–135 is the 'HIGH' region element; the sequence is ANPTGPLHIGH.

The protein belongs to the class-I aminoacyl-tRNA synthetase family. As to quaternary structure, monomer.

The protein localises to the cytoplasm. It carries out the reaction tRNA(Arg) + L-arginine + ATP = L-arginyl-tRNA(Arg) + AMP + diphosphate. The chain is Arginine--tRNA ligase from Nitratidesulfovibrio vulgaris (strain ATCC 29579 / DSM 644 / CCUG 34227 / NCIMB 8303 / VKM B-1760 / Hildenborough) (Desulfovibrio vulgaris).